We begin with the raw amino-acid sequence, 404 residues long: Probable tRNA sulfurtransferase (404 aa).

One can recognise a THUMP domain in the interval 61–166; that stretch reads EAVSERLKDV…SGYSYIMCDE (106 aa). Residues 184-185, 209-210, R266, G288, and Q297 contribute to the ATP site; these read LL and HF.

The protein belongs to the ThiI family.

The protein localises to the cytoplasm. The enzyme catalyses [ThiI sulfur-carrier protein]-S-sulfanyl-L-cysteine + a uridine in tRNA + 2 reduced [2Fe-2S]-[ferredoxin] + ATP + H(+) = [ThiI sulfur-carrier protein]-L-cysteine + a 4-thiouridine in tRNA + 2 oxidized [2Fe-2S]-[ferredoxin] + AMP + diphosphate. The catalysed reaction is [ThiS sulfur-carrier protein]-C-terminal Gly-Gly-AMP + S-sulfanyl-L-cysteinyl-[cysteine desulfurase] + AH2 = [ThiS sulfur-carrier protein]-C-terminal-Gly-aminoethanethioate + L-cysteinyl-[cysteine desulfurase] + A + AMP + 2 H(+). It functions in the pathway cofactor biosynthesis; thiamine diphosphate biosynthesis. In terms of biological role, catalyzes the ATP-dependent transfer of a sulfur to tRNA to produce 4-thiouridine in position 8 of tRNAs, which functions as a near-UV photosensor. Also catalyzes the transfer of sulfur to the sulfur carrier protein ThiS, forming ThiS-thiocarboxylate. This is a step in the synthesis of thiazole, in the thiamine biosynthesis pathway. The sulfur is donated as persulfide by IscS. This Bacillus cereus (strain ATCC 14579 / DSM 31 / CCUG 7414 / JCM 2152 / NBRC 15305 / NCIMB 9373 / NCTC 2599 / NRRL B-3711) protein is Probable tRNA sulfurtransferase.